A 160-amino-acid polypeptide reads, in one-letter code: Transcription elongation factor GreA (160 aa).

Residues 1–71 (MAEKTYPMTL…GQISTLETKI (71 aa)) adopt a coiled-coil conformation.

Belongs to the GreA/GreB family.

Functionally, necessary for efficient RNA polymerase transcription elongation past template-encoded arresting sites. The arresting sites in DNA have the property of trapping a certain fraction of elongating RNA polymerases that pass through, resulting in locked ternary complexes. Cleavage of the nascent transcript by cleavage factors such as GreA or GreB allows the resumption of elongation from the new 3'terminus. GreA releases sequences of 2 to 3 nucleotides. The protein is Transcription elongation factor GreA of Streptococcus pyogenes serotype M3 (strain ATCC BAA-595 / MGAS315).